We begin with the raw amino-acid sequence, 349 residues long: DNA replication and repair protein RecF (349 aa).

30-37 provides a ligand contact to ATP; sequence GKNGSGKT.

It belongs to the RecF family.

Its subcellular location is the cytoplasm. In terms of biological role, the RecF protein is involved in DNA metabolism; it is required for DNA replication and normal SOS inducibility. RecF binds preferentially to single-stranded, linear DNA. It also seems to bind ATP. The protein is DNA replication and repair protein RecF of Francisella tularensis subsp. holarctica (strain FTNF002-00 / FTA).